The primary structure comprises 156 residues: Small ribosomal subunit protein uS7 (156 aa).

Belongs to the universal ribosomal protein uS7 family. As to quaternary structure, part of the 30S ribosomal subunit. Contacts proteins S9 and S11.

Its function is as follows. One of the primary rRNA binding proteins, it binds directly to 16S rRNA where it nucleates assembly of the head domain of the 30S subunit. Is located at the subunit interface close to the decoding center, probably blocks exit of the E-site tRNA. This is Small ribosomal subunit protein uS7 from Pseudomonas fluorescens (strain SBW25).